Reading from the N-terminus, the 467-residue chain is Citrate synthase, mitochondrial (467 aa).

Catalysis depends on residues His301 and His347.

This sequence belongs to the citrate synthase family.

The protein resides in the mitochondrion matrix. It carries out the reaction oxaloacetate + acetyl-CoA + H2O = citrate + CoA + H(+). The protein operates within carbohydrate metabolism; tricarboxylic acid cycle; isocitrate from oxaloacetate: step 1/2. This is Citrate synthase, mitochondrial (CIT) from Candida tropicalis (Yeast).